The following is a 704-amino-acid chain: Elongation factor G (704 aa).

One can recognise a tr-type G domain in the interval E8–N290. GTP is bound by residues A17–T24, D88–H92, and N142–D145.

The protein belongs to the TRAFAC class translation factor GTPase superfamily. Classic translation factor GTPase family. EF-G/EF-2 subfamily.

Its subcellular location is the cytoplasm. In terms of biological role, catalyzes the GTP-dependent ribosomal translocation step during translation elongation. During this step, the ribosome changes from the pre-translocational (PRE) to the post-translocational (POST) state as the newly formed A-site-bound peptidyl-tRNA and P-site-bound deacylated tRNA move to the P and E sites, respectively. Catalyzes the coordinated movement of the two tRNA molecules, the mRNA and conformational changes in the ribosome. This chain is Elongation factor G, found in Francisella tularensis subsp. holarctica (strain LVS).